The primary structure comprises 182 residues: GDASHAVDHPIGGHPEHEHDLREEEGPLIFPMKDLPGTPGTVGGLALRMGQFIFAAASVVIMVTSDEFINFTAFCYLAAAMALQFLWSFVLATIDVYALLIKRGLPNSILLSLFVVGDWVTATLSLAAACSTAGITVLFDKDLNYCDQMHCRRYQLSATMAFFSWVLIAISSLITLLLLVSE.

A disordered region spans residues 1-20; the sequence is GDASHAVDHPIGGHPEHEHD. Residues 1–41 are Cytoplasmic-facing; it reads GDASHAVDHPIGGHPEHEHDLREEEGPLIFPMKDLPGTPGT. The helical transmembrane segment at 42-62 threads the bilayer; sequence VGGLALRMGQFIFAAASVVIM. Residues 63–73 are Extracellular-facing; the sequence is VTSDEFINFTA. A glycan (N-linked (GlcNAc...) asparagine) is linked at Asn-70. A helical transmembrane segment spans residues 74–94; the sequence is FCYLAAAMALQFLWSFVLATI. Topologically, residues 95–108 are cytoplasmic; that stretch reads DVYALLIKRGLPNS. A helical transmembrane segment spans residues 109–129; that stretch reads ILLSLFVVGDWVTATLSLAAA. Residues 130 to 159 are Extracellular-facing; it reads CSTAGITVLFDKDLNYCDQMHCRRYQLSAT. A helical transmembrane segment spans residues 160-180; the sequence is MAFFSWVLIAISSLITLLLLV. At 181–182 the chain is on the cytoplasmic side; sequence SE.

It belongs to the Casparian strip membrane proteins (CASP) family. Homodimer and heterodimers.

It localises to the cell membrane. This chain is CASP-like protein 5B1, found in Picea sitchensis (Sitka spruce).